Consider the following 195-residue polypeptide: 2-amino-4-hydroxy-6-hydroxymethyldihydropteridine pyrophosphokinase (195 aa).

Belongs to the HPPK family.

The catalysed reaction is 6-hydroxymethyl-7,8-dihydropterin + ATP = (7,8-dihydropterin-6-yl)methyl diphosphate + AMP + H(+). It functions in the pathway cofactor biosynthesis; tetrahydrofolate biosynthesis; 2-amino-4-hydroxy-6-hydroxymethyl-7,8-dihydropteridine diphosphate from 7,8-dihydroneopterin triphosphate: step 4/4. In terms of biological role, catalyzes the transfer of pyrophosphate from adenosine triphosphate (ATP) to 6-hydroxymethyl-7,8-dihydropterin, an enzymatic step in folate biosynthesis pathway. This Synechocystis sp. (strain ATCC 27184 / PCC 6803 / Kazusa) protein is 2-amino-4-hydroxy-6-hydroxymethyldihydropteridine pyrophosphokinase (folK).